The chain runs to 1237 residues: Clustered mitochondria protein homolog (1237 aa).

One can recognise a Clu domain in the interval 291-535; it reads DITRSQENCL…RITPLDVAWS (245 aa). Composition is skewed to basic and acidic residues over residues 575-597 and 845-854; these read RKTA…DKAE and SQIKSQEHSP. 2 disordered regions span residues 575 to 614 and 845 to 886; these read RKTA…AVAS and SQIK…VAAS. TPR repeat units follow at residues 957–990, 999–1032, and 1041–1074; these read AKLY…TERT, ILSY…WKII, and ITTM…CEGL. Disordered stretches follow at residues 1152 to 1189 and 1201 to 1237; these read RLRR…KSIG and FIEG…VQTA. A compositionally biased stretch (polar residues) spans 1156-1187; it reads TNLSPRMTIGTKPQPQVGQNAPATTNGATSKS.

This sequence belongs to the CLU family. May associate with the eukaryotic translation initiation factor 3 (eIF-3) complex.

The protein resides in the cytoplasm. Its function is as follows. mRNA-binding protein involved in proper cytoplasmic distribution of mitochondria. This is Clustered mitochondria protein homolog from Ajellomyces capsulatus (strain NAm1 / WU24) (Darling's disease fungus).